A 116-amino-acid polypeptide reads, in one-letter code: Propanediol dehydratase-reactivating factor small subunit (116 aa).

Glu31 lines the Mg(2+) pocket.

The protein belongs to the DdrB/PduH family. As to quaternary structure, forms a heterotetramer PduG(2)/PduH(2). Mg(2+) serves as cofactor.

Its subcellular location is the bacterial microcompartment. The catalysed reaction is ATP + H2O = ADP + phosphate + H(+). The protein operates within polyol metabolism; 1,2-propanediol degradation. Functionally, small subunit of the propanediol dehydratase-reactivating factor (DDR), which reactivates suicidally inhibited adenosylcobalamin-dependent propanediol dehydratase (diol dehydratase, DDH) found in the bacterial microcompartment (BMC) dedicated to 1,2-propanediol (1,2-PD) degradation. Reactivates inactivated DDH in the presence of ATP, Mg(2+) and free adenosylcobalamin (AdoCbl), by mediating the exchange of the tightly bound damaged cofactor AdoCbl for a free intact one. In terms of biological role, the 1,2-PD-specific bacterial microcompartment (BMC) concentrates low levels of 1,2-PD catabolic enzymes, concentrates volatile reaction intermediates thus enhancing pathway flux and keeps the level of toxic, mutagenic propionaldehyde low. The polypeptide is Propanediol dehydratase-reactivating factor small subunit (Salmonella typhimurium (strain LT2 / SGSC1412 / ATCC 700720)).